The primary structure comprises 215 residues: Pyrrolidone-carboxylate peptidase (215 aa).

Catalysis depends on residues E78, C141, and H165.

It belongs to the peptidase C15 family. In terms of assembly, homotetramer.

Its subcellular location is the cytoplasm. The enzyme catalyses Release of an N-terminal pyroglutamyl group from a polypeptide, the second amino acid generally not being Pro.. Removes 5-oxoproline from various penultimate amino acid residues except L-proline. The protein is Pyrrolidone-carboxylate peptidase of Streptococcus pyogenes serotype M18 (strain MGAS8232).